Here is a 185-residue protein sequence, read N- to C-terminus: RING-H2 finger protein ATL8 (185 aa).

A helical transmembrane segment spans residues 28–48 (LVLILAVLLCALTCIIGLIAV). An RING-type; atypical zinc finger spans residues 104 to 146 (CAICLTEFAAGDELRVLPQCGHGFHVSCIDTWLGSHSSCPSCR). The tract at residues 161–185 (PGSSSSGPEPDTRIKQREDGPDNLP) is disordered. Positions 170-185 (PDTRIKQREDGPDNLP) are enriched in basic and acidic residues.

It belongs to the RING-type zinc finger family. ATL subfamily.

The protein resides in the membrane. It catalyses the reaction S-ubiquitinyl-[E2 ubiquitin-conjugating enzyme]-L-cysteine + [acceptor protein]-L-lysine = [E2 ubiquitin-conjugating enzyme]-L-cysteine + N(6)-ubiquitinyl-[acceptor protein]-L-lysine.. It participates in protein modification; protein ubiquitination. This is RING-H2 finger protein ATL8 (ATL8) from Arabidopsis thaliana (Mouse-ear cress).